We begin with the raw amino-acid sequence, 134 residues long: Ribosome-binding factor A (134 aa).

This sequence belongs to the RbfA family. As to quaternary structure, monomer. Binds 30S ribosomal subunits, but not 50S ribosomal subunits or 70S ribosomes.

The protein localises to the cytoplasm. In terms of biological role, one of several proteins that assist in the late maturation steps of the functional core of the 30S ribosomal subunit. Associates with free 30S ribosomal subunits (but not with 30S subunits that are part of 70S ribosomes or polysomes). Required for efficient processing of 16S rRNA. May interact with the 5'-terminal helix region of 16S rRNA. The chain is Ribosome-binding factor A from Cyanothece sp. (strain PCC 7425 / ATCC 29141).